A 407-amino-acid chain; its full sequence is S-adenosylmethionine synthase (407 aa).

Residue 140–145 (GQGSAD) participates in ATP binding.

The protein belongs to the AdoMet synthase 2 family. It depends on Mg(2+) as a cofactor.

The catalysed reaction is L-methionine + ATP + H2O = S-adenosyl-L-methionine + phosphate + diphosphate. It participates in amino-acid biosynthesis; S-adenosyl-L-methionine biosynthesis; S-adenosyl-L-methionine from L-methionine: step 1/1. Catalyzes the formation of S-adenosylmethionine from methionine and ATP. The sequence is that of S-adenosylmethionine synthase from Methanosphaera stadtmanae (strain ATCC 43021 / DSM 3091 / JCM 11832 / MCB-3).